We begin with the raw amino-acid sequence, 323 residues long: Cyclin-H (323 aa).

Residues 296 to 323 are disordered; that stretch reads GYEDDGYISKKPKTEEDEWTDEDFGDSL. Positions 310–323 are enriched in acidic residues; that stretch reads EEDEWTDEDFGDSL.

Belongs to the cyclin family. Cyclin C subfamily. Associates primarily with CDK7 and MAT1 to form the CAK complex. CAK can further associate with the core-TFIIH to form the TFIIH basal transcription factor.

It localises to the nucleus. Its function is as follows. Regulates CDK7, the catalytic subunit of the CDK-activating kinase (CAK) enzymatic complex. CAK activates the cyclin-associated kinases CDK1, CDK2, CDK4 and CDK6 by threonine phosphorylation. CAK complexed to the core-TFIIH basal transcription factor activates RNA polymerase II by serine phosphorylation of the repetitive C-terminal domain (CTD) of its large subunit (POLR2A), allowing its escape from the promoter and elongation of the transcripts. Involved in cell cycle control and in RNA transcription by RNA polymerase II. Its expression and activity are constant throughout the cell cycle. The polypeptide is Cyclin-H (ccnh) (Xenopus laevis (African clawed frog)).